Reading from the N-terminus, the 226-residue chain is Beta-casein (226 aa).

A signal peptide spans 1 to 15 (MKVLILACLVALALA). Thr18 carries the phosphothreonine; in form 5-P modification. Ser21 carries the post-translational modification Phosphoserine; in form 4-P and form 5-P. Ser23 carries the phosphoserine; in form 3-P, form 4-P and form 5-P modification. Phosphoserine; in form 1-P, form 2-P, form 3-P, form 4-P and form 5-P occurs at positions 24 and 25.

This sequence belongs to the beta-casein family. In terms of processing, form 1-P is phosphorylated once; half of the molecules are phosphorylated on Ser-24, half on Ser-25. As to expression, mammary gland specific. Secreted in milk.

The protein resides in the secreted. Functionally, important role in determination of the surface properties of the casein micelles. This is Beta-casein (CSN2) from Homo sapiens (Human).